Here is a 209-residue protein sequence, read N- to C-terminus: N-(5'-phosphoribosyl)anthranilate isomerase (209 aa).

This sequence belongs to the TrpF family.

It carries out the reaction N-(5-phospho-beta-D-ribosyl)anthranilate = 1-(2-carboxyphenylamino)-1-deoxy-D-ribulose 5-phosphate. The protein operates within amino-acid biosynthesis; L-tryptophan biosynthesis; L-tryptophan from chorismate: step 3/5. This is N-(5'-phosphoribosyl)anthranilate isomerase from Granulibacter bethesdensis (strain ATCC BAA-1260 / CGDNIH1).